The sequence spans 341 residues: Anthranilate phosphoribosyltransferase (341 aa).

Residues Gly-83, Ser-91, Asn-93–Thr-96, Lys-111–Arg-115, and Ser-123 contribute to the 5-phospho-alpha-D-ribose 1-diphosphate site. Gly-83 provides a ligand contact to anthranilate. Ser-95 is a binding site for Mg(2+). Asn-114 provides a ligand contact to anthranilate. Position 169 (Arg-169) interacts with anthranilate. Mg(2+) is bound by residues Asp-228 and Glu-229.

Belongs to the anthranilate phosphoribosyltransferase family. Homodimer. The cofactor is Mg(2+).

It catalyses the reaction N-(5-phospho-beta-D-ribosyl)anthranilate + diphosphate = 5-phospho-alpha-D-ribose 1-diphosphate + anthranilate. It functions in the pathway amino-acid biosynthesis; L-tryptophan biosynthesis; L-tryptophan from chorismate: step 2/5. Catalyzes the transfer of the phosphoribosyl group of 5-phosphorylribose-1-pyrophosphate (PRPP) to anthranilate to yield N-(5'-phosphoribosyl)-anthranilate (PRA). This Hyphomonas neptunium (strain ATCC 15444) protein is Anthranilate phosphoribosyltransferase.